A 125-amino-acid polypeptide reads, in one-letter code: Small ribosomal subunit protein uS13 (125 aa).

The disordered stretch occupies residues 90 to 125; the sequence is QRHRKGLPVRGQRTKTNARTRKGPKRTVAGKKKATK.

It belongs to the universal ribosomal protein uS13 family. In terms of assembly, part of the 30S ribosomal subunit. Forms a loose heterodimer with protein S19. Forms two bridges to the 50S subunit in the 70S ribosome.

In terms of biological role, located at the top of the head of the 30S subunit, it contacts several helices of the 16S rRNA. In the 70S ribosome it contacts the 23S rRNA (bridge B1a) and protein L5 of the 50S subunit (bridge B1b), connecting the 2 subunits; these bridges are implicated in subunit movement. Contacts the tRNAs in the A and P-sites. The protein is Small ribosomal subunit protein uS13 of Bifidobacterium adolescentis (strain ATCC 15703 / DSM 20083 / NCTC 11814 / E194a).